We begin with the raw amino-acid sequence, 406 residues long: 8-amino-7-oxononanoate synthase (406 aa).

Arginine 21 contributes to the substrate binding site. 112–113 (GY) lines the pyridoxal 5'-phosphate pocket. Histidine 137 serves as a coordination point for substrate. Pyridoxal 5'-phosphate is bound by residues serine 183, histidine 211, and threonine 239. N6-(pyridoxal phosphate)lysine is present on lysine 242. Threonine 358 provides a ligand contact to substrate.

This sequence belongs to the class-II pyridoxal-phosphate-dependent aminotransferase family. BioF subfamily. In terms of assembly, homodimer. It depends on pyridoxal 5'-phosphate as a cofactor.

It carries out the reaction 6-carboxyhexanoyl-[ACP] + L-alanine + H(+) = (8S)-8-amino-7-oxononanoate + holo-[ACP] + CO2. The protein operates within cofactor biosynthesis; biotin biosynthesis. Functionally, catalyzes the decarboxylative condensation of pimeloyl-[acyl-carrier protein] and L-alanine to produce 8-amino-7-oxononanoate (AON), [acyl-carrier protein], and carbon dioxide. The chain is 8-amino-7-oxononanoate synthase from Burkholderia orbicola (strain MC0-3).